The following is a 331-amino-acid chain: GTPase Obg (331 aa).

An Obg domain is found at 1-159 (MQFIDQARIA…RELQLELKLL (159 aa)). The 169-residue stretch at 160-328 (AEVGLVGLPN…LLQQVWQELG (169 aa)) folds into the OBG-type G domain. GTP-binding positions include 166 to 173 (GLPNAGKS), 191 to 195 (FTTLV), 213 to 216 (DIPG), 280 to 283 (SKSE), and 309 to 311 (SAV). The Mg(2+) site is built by Ser-173 and Thr-193.

The protein belongs to the TRAFAC class OBG-HflX-like GTPase superfamily. OBG GTPase family. In terms of assembly, monomer. Mg(2+) is required as a cofactor.

The protein resides in the cytoplasm. Its function is as follows. An essential GTPase which binds GTP, GDP and possibly (p)ppGpp with moderate affinity, with high nucleotide exchange rates and a fairly low GTP hydrolysis rate. Plays a role in control of the cell cycle, stress response, ribosome biogenesis and in those bacteria that undergo differentiation, in morphogenesis control. The sequence is that of GTPase Obg from Synechococcus sp. (strain RCC307).